The primary structure comprises 442 residues: MSELKERLLPPRPASAMNLRDASVTRPSASGRPPLLGVDVLGLKKRGQGLRSWIRVDTSGNTQVMEVDKFTMMRRCDLPARDLRLLDPLFVYPSTILGREKAIVVNLEQIRCIITADEVLLLNSLDNYVLRYVVELQQRLKTSSVGEMWQQENSQLSRRRSRSFDNAFENSSPDYLPFEFRALEIALEAACTFLDSQASELEIEAYPLLDELTSKISTLNLERVRRLKSRLVALTRRVQKVRDEIEQLMDDDGDMAEMYLTEKKRRMEGSMYGDQSLLGYRSNDGLSVSAPVSPVSSPPDSRRLDKSLSIARSRHDSARSSEGAENIEELEMLLEAYFVVIDSTLNKLTSLKEYIDDTEDFINIQLDNVRNQLIQFELLLTTATFVVAIFGVVAGIFGMNFEIDFFNQPGAFRWVLIITGVCGFVIFSAFVWFFKYRRLMPL.

The segment at 1 to 30 is disordered; sequence MSELKERLLPPRPASAMNLRDASVTRPSAS. The next 2 membrane-spanning stretches (helical) occupy residues 378-398 and 414-434; these read LLLT…GIFG and WVLI…VWFF. The Required for magnesium transport activity motif lies at 398–400; that stretch reads GMN.

This sequence belongs to the CorA metal ion transporter (MIT) (TC 1.A.35.5) family. In terms of tissue distribution, expressed in the whole plant except stems.

It localises to the membrane. Functionally, magnesium transporter that may mediate the influx of magnesium. The protein is Magnesium transporter MRS2-1 (MRS2-1) of Arabidopsis thaliana (Mouse-ear cress).